The primary structure comprises 262 residues: Proteasome subunit alpha (262 aa).

The segment at leucine 235–alanine 262 is disordered.

Belongs to the peptidase T1A family. As to quaternary structure, the 20S proteasome core is composed of 14 alpha and 14 beta subunits that assemble into four stacked heptameric rings, resulting in a barrel-shaped structure. The two inner rings, each composed of seven catalytic beta subunits, are sandwiched by two outer rings, each composed of seven alpha subunits. The catalytic chamber with the active sites is on the inside of the barrel. Has a gated structure, the ends of the cylinder being occluded by the N-termini of the alpha-subunits. Is capped by the proteasome-associated ATPase, ARC.

It is found in the cytoplasm. Its pathway is protein degradation; proteasomal Pup-dependent pathway. With respect to regulation, the formation of the proteasomal ATPase ARC-20S proteasome complex, likely via the docking of the C-termini of ARC into the intersubunit pockets in the alpha-rings, may trigger opening of the gate for substrate entry. Interconversion between the open-gate and close-gate conformations leads to a dynamic regulation of the 20S proteasome proteolysis activity. Component of the proteasome core, a large protease complex with broad specificity involved in protein degradation. This Gordonia bronchialis (strain ATCC 25592 / DSM 43247 / BCRC 13721 / JCM 3198 / KCTC 3076 / NBRC 16047 / NCTC 10667) (Rhodococcus bronchialis) protein is Proteasome subunit alpha.